We begin with the raw amino-acid sequence, 403 residues long: uncharacterized protein (403 aa).

Positions 3–126 (QVKIGQFKFG…EVIPQVLCTG (124 aa)) constitute a Bro-N domain.

This is an uncharacterized protein from Lepidoptera (butterflies and moths).